A 148-amino-acid polypeptide reads, in one-letter code: 3-dehydroquinate dehydratase (148 aa).

Tyr-23 serves as the catalytic Proton acceptor. Substrate contacts are provided by Asn-75, His-81, and Asp-88. His-101 (proton donor) is an active-site residue. Residues 102 to 103 and Arg-112 each bind substrate; that span reads LS.

It belongs to the type-II 3-dehydroquinase family. As to quaternary structure, homododecamer.

It carries out the reaction 3-dehydroquinate = 3-dehydroshikimate + H2O. Its pathway is metabolic intermediate biosynthesis; chorismate biosynthesis; chorismate from D-erythrose 4-phosphate and phosphoenolpyruvate: step 3/7. Its function is as follows. Catalyzes a trans-dehydration via an enolate intermediate. The polypeptide is 3-dehydroquinate dehydratase (Halorhodospira halophila (strain DSM 244 / SL1) (Ectothiorhodospira halophila (strain DSM 244 / SL1))).